The sequence spans 236 residues: Aminopyrimidine aminohydrolase (236 aa).

Substrate is bound at residue D44. The active-site Nucleophile is the C135. 2 residues coordinate substrate: Y139 and Y163. E205 functions as the Proton donor in the catalytic mechanism.

Belongs to the TenA family. As to quaternary structure, homotetramer.

It carries out the reaction 4-amino-5-aminomethyl-2-methylpyrimidine + H2O = 4-amino-5-hydroxymethyl-2-methylpyrimidine + NH4(+). The enzyme catalyses thiamine + H2O = 5-(2-hydroxyethyl)-4-methylthiazole + 4-amino-5-hydroxymethyl-2-methylpyrimidine + H(+). Its pathway is cofactor biosynthesis; thiamine diphosphate biosynthesis. In terms of biological role, catalyzes an amino-pyrimidine hydrolysis reaction at the C5' of the pyrimidine moiety of thiamine compounds, a reaction that is part of a thiamine salvage pathway. Thus, catalyzes the conversion of 4-amino-5-aminomethyl-2-methylpyrimidine to 4-amino-5-hydroxymethyl-2-methylpyrimidine (HMP). To a lesser extent, is also able to catalyze the hydrolytic cleavage of thiamine; however, this thiaminase activity is unlikely to be physiologically relevant. Therefore, is involved in the regeneration of the thiamine pyrimidine from thiamine degraded products present in the environment, rather than in thiamine degradation. This is Aminopyrimidine aminohydrolase from Bacillus subtilis (strain 168).